The sequence spans 519 residues: 2-isopropylmalate synthase (519 aa).

Residues 5–267 form the Pyruvate carboxyltransferase domain; it reads VIIFDTTLRD…YTNIHHHEIY (263 aa). Mn(2+) contacts are provided by D14, H202, H204, and N238. Residues 392-519 are regulatory domain; sequence ALESFHIHST…NHKNTQHIKK (128 aa).

It belongs to the alpha-IPM synthase/homocitrate synthase family. LeuA type 1 subfamily. In terms of assembly, homodimer. Requires Mn(2+) as cofactor.

It localises to the cytoplasm. It carries out the reaction 3-methyl-2-oxobutanoate + acetyl-CoA + H2O = (2S)-2-isopropylmalate + CoA + H(+). Its pathway is amino-acid biosynthesis; L-leucine biosynthesis; L-leucine from 3-methyl-2-oxobutanoate: step 1/4. In terms of biological role, catalyzes the condensation of the acetyl group of acetyl-CoA with 3-methyl-2-oxobutanoate (2-ketoisovalerate) to form 3-carboxy-3-hydroxy-4-methylpentanoate (2-isopropylmalate). The chain is 2-isopropylmalate synthase from Blochmanniella floridana.